Here is a 75-residue protein sequence, read N- to C-terminus: Large ribosomal subunit protein bL28 (75 aa).

This sequence belongs to the bacterial ribosomal protein bL28 family.

This is Large ribosomal subunit protein bL28 from Buchnera aphidicola subsp. Acyrthosiphon pisum (strain 5A).